Here is a 537-residue protein sequence, read N- to C-terminus: Tripeptidyl aminopeptidase (537 aa).

The first 36 residues, methionine 1–alanine 36, serve as a signal peptide directing secretion. A propeptide spanning residues alanine 37 to alanine 39 is cleaved from the precursor. The region spanning glycine 119 to glycine 497 is the AB hydrolase-1 domain. Serine 245 (nucleophile) is an active-site residue. Aspartate 470 is a catalytic residue. Histidine 499 serves as the catalytic Proton donor.

This sequence belongs to the peptidase S33 family.

It localises to the secreted. Functionally, cleaves tripeptides from the N-termini of proteins. Does not cleave mono- or dipeptides, or N-terminally blocked peptides. The sequence is that of Tripeptidyl aminopeptidase from Streptomyces lividans.